The chain runs to 652 residues: DNA ligase (652 aa).

Residues 29–33 (DSEYD), 78–79 (SL), and glutamate 107 contribute to the NAD(+) site. Residue lysine 109 is the N6-AMP-lysine intermediate of the active site. NAD(+) contacts are provided by arginine 130, glutamate 164, lysine 278, and lysine 302. Positions 395, 398, 413, and 418 each coordinate Zn(2+). One can recognise a BRCT domain in the interval 577-652 (VADAALSGLT…VRDEAWLESL (76 aa)).

This sequence belongs to the NAD-dependent DNA ligase family. LigA subfamily. It depends on Mg(2+) as a cofactor. Mn(2+) is required as a cofactor.

The catalysed reaction is NAD(+) + (deoxyribonucleotide)n-3'-hydroxyl + 5'-phospho-(deoxyribonucleotide)m = (deoxyribonucleotide)n+m + AMP + beta-nicotinamide D-nucleotide.. Its function is as follows. DNA ligase that catalyzes the formation of phosphodiester linkages between 5'-phosphoryl and 3'-hydroxyl groups in double-stranded DNA using NAD as a coenzyme and as the energy source for the reaction. It is essential for DNA replication and repair of damaged DNA. This chain is DNA ligase, found in Streptococcus pneumoniae (strain P1031).